A 706-amino-acid polypeptide reads, in one-letter code: Glycylpeptide N-tetradecanoyltransferase (706 aa).

Positions 1-119 are disordered; the sequence is MSGIAGTSQD…LASGSSREGK (119 aa). Residues 7–42 show a composition bias toward low complexity; that stretch reads TSQDTSVAASASSSSTRPAAASSSIAPPSPSLTTAP. The span at 47–65 shows a compositional bias: acidic residues; the sequence is EQDDDDDQENDDEEEEEEG. Residues 78-95 show a composition bias toward basic residues; sequence KQRKKKKSKAAAKLRKKL. Residues 180–183, 317–319, and 325–329 each bind tetradecanoyl-CoA; these read HKFW, LCV, and SKRLA. Catalysis depends on Val-706, which acts as the Proton acceptor; via carboxylate.

Belongs to the NMT family. In terms of assembly, monomer.

It is found in the cytoplasm. The enzyme catalyses N-terminal glycyl-[protein] + tetradecanoyl-CoA = N-tetradecanoylglycyl-[protein] + CoA + H(+). Its function is as follows. Adds a myristoyl group to the N-terminal glycine residue of certain cellular proteins. The sequence is that of Glycylpeptide N-tetradecanoyltransferase (NMT1) from Mycosarcoma maydis (Corn smut fungus).